A 434-amino-acid chain; its full sequence is Tubulin gamma chain (434 aa).

Position 135-141 (135-141) interacts with GTP; sequence AGGTGSG.

Belongs to the tubulin family.

It localises to the cytoplasm. The protein resides in the cytoskeleton. Its subcellular location is the microtubule organizing center. The protein localises to the spindle pole body. Its function is as follows. Tubulin is the major constituent of microtubules. The gamma chain is found at microtubule organizing centers (MTOC) such as the spindle poles or the centrosome, suggesting that it is involved in the minus-end nucleation of microtubule assembly. In Encephalitozoon cuniculi (strain GB-M1) (Microsporidian parasite), this protein is Tubulin gamma chain (TUB4).